A 319-amino-acid polypeptide reads, in one-letter code: Acetyl-coenzyme A carboxylase carboxyl transferase subunit beta, chloroplastic (319 aa).

Positions 47 to 319 (LWVQCDNCES…ELFYVLQSSS (273 aa)) constitute a CoA carboxyltransferase N-terminal domain. Zn(2+) contacts are provided by C51, C54, C70, and C73. A C4-type zinc finger spans residues 51-73 (CDNCESLLYIRFLRENKSVCEEC).

It belongs to the AccD/PCCB family. As to quaternary structure, acetyl-CoA carboxylase is a heterohexamer composed of biotin carboxyl carrier protein, biotin carboxylase and 2 subunits each of ACCase subunit alpha and ACCase plastid-coded subunit beta (accD). Zn(2+) serves as cofactor.

It localises to the plastid. The protein localises to the chloroplast stroma. The enzyme catalyses N(6)-carboxybiotinyl-L-lysyl-[protein] + acetyl-CoA = N(6)-biotinyl-L-lysyl-[protein] + malonyl-CoA. Its pathway is lipid metabolism; malonyl-CoA biosynthesis; malonyl-CoA from acetyl-CoA: step 1/1. Component of the acetyl coenzyme A carboxylase (ACC) complex. Biotin carboxylase (BC) catalyzes the carboxylation of biotin on its carrier protein (BCCP) and then the CO(2) group is transferred by the transcarboxylase to acetyl-CoA to form malonyl-CoA. The chain is Acetyl-coenzyme A carboxylase carboxyl transferase subunit beta, chloroplastic from Picea abies (Norway spruce).